The sequence spans 404 residues: MPDIKRVVLAYSGGLDTSVIAKWLEVERGLEVVTFTADLGQGEELEPARAKAQAMGIPDKHIFIEDLREEFVRDYVFPMMRANARYEGDYLLGTSIARPLISKRLVEIAQETGADAIAHGATGKGNDQVRFELSAYALDPDIKVIAPWREWDLTSRTALIAWAEKHQIQVPKDKRGESPFSTDANLLHTSSEGKVLEDPWEETPDYVYSRTVNPEDAPDEPEFITIDFERGDGIALNGEAMSPANLLTALNELGRKHGIGRLDLVENRFVGMKSRGMYETPGGEIYARAHRGIEQITLDRGAAHLKDELMPKYAELIYNGFWFSPEREMLQAAIDLSQDKVSGTVRLKLYKGNADVVGRKSPNSLYSEAHVTFEDDAGAYDQSDAEGFIRLNALRLKLLGKRDR.

Residues A10–S18 and A37 each bind ATP. L-citrulline is bound by residues Y90 and S95. An ATP-binding site is contributed by G120. Residues T122, N126, and D127 each contribute to the L-aspartate site. N126 contacts L-citrulline. Residues R130, S181, S190, E266, and Y278 each coordinate L-citrulline.

The protein belongs to the argininosuccinate synthase family. Type 1 subfamily. In terms of assembly, homotetramer.

Its subcellular location is the cytoplasm. The enzyme catalyses L-citrulline + L-aspartate + ATP = 2-(N(omega)-L-arginino)succinate + AMP + diphosphate + H(+). It functions in the pathway amino-acid biosynthesis; L-arginine biosynthesis; L-arginine from L-ornithine and carbamoyl phosphate: step 2/3. This is Argininosuccinate synthase from Erythrobacter litoralis (strain HTCC2594).